The following is a 98-amino-acid chain: NADH-ubiquinone oxidoreductase chain 4L (98 aa).

Helical transmembrane passes span 1–21 (MTLV…GLLM), 26–46 (LMSA…LATI), and 59–79 (MPII…ALLV).

This sequence belongs to the complex I subunit 4L family. In terms of assembly, core subunit of respiratory chain NADH dehydrogenase (Complex I) which is composed of 45 different subunits.

The protein localises to the mitochondrion inner membrane. The enzyme catalyses a ubiquinone + NADH + 5 H(+)(in) = a ubiquinol + NAD(+) + 4 H(+)(out). Functionally, core subunit of the mitochondrial membrane respiratory chain NADH dehydrogenase (Complex I) which catalyzes electron transfer from NADH through the respiratory chain, using ubiquinone as an electron acceptor. Part of the enzyme membrane arm which is embedded in the lipid bilayer and involved in proton translocation. This Pontoporia blainvillei (Franciscana) protein is NADH-ubiquinone oxidoreductase chain 4L (MT-ND4L).